We begin with the raw amino-acid sequence, 463 residues long: Methionine aminopeptidase 2-1 (463 aa).

The tract at residues 1–98 (MGSKTPEEQI…PPRVPLSDLF (98 aa)) is disordered. The segment covering 30–45 (RGTHLSRDGDGSLGDH) has biased composition (basic and acidic residues). Positions 46–55 (GDDDDADEDD) are enriched in acidic residues. A compositionally biased stretch (basic residues) spans 69–81 (KKKKRPKKKKKPA). His214 provides a ligand contact to substrate. A divalent metal cation is bound by residues Asp235, Asp246, and His315. Residue His323 participates in substrate binding. A divalent metal cation contacts are provided by Glu348 and Glu444.

It belongs to the peptidase M24A family. Methionine aminopeptidase eukaryotic type 2 subfamily. The cofactor is Co(2+). Zn(2+) is required as a cofactor. It depends on Mn(2+) as a cofactor. Requires Fe(2+) as cofactor.

The protein localises to the cytoplasm. The catalysed reaction is Release of N-terminal amino acids, preferentially methionine, from peptides and arylamides.. Functionally, cotranslationally removes the N-terminal methionine from nascent proteins. The N-terminal methionine is often cleaved when the second residue in the primary sequence is small and uncharged (Met-Ala-, Cys, Gly, Pro, Ser, Thr, or Val). The polypeptide is Methionine aminopeptidase 2-1 (Colletotrichum graminicola (strain M1.001 / M2 / FGSC 10212) (Maize anthracnose fungus)).